The chain runs to 235 residues: Probable RNA 2'-phosphotransferase (235 aa).

This sequence belongs to the KptA/TPT1 family.

Removes the 2'-phosphate from RNA via an intermediate in which the phosphate is ADP-ribosylated by NAD followed by a presumed transesterification to release the RNA and generate ADP-ribose 1''-2''-cyclic phosphate (APPR&gt;P). May function as an ADP-ribosylase. This Thermoplasma volcanium (strain ATCC 51530 / DSM 4299 / JCM 9571 / NBRC 15438 / GSS1) protein is Probable RNA 2'-phosphotransferase.